The following is a 440-amino-acid chain: Inner membrane metabolite transport protein YhjE (440 aa).

Over 1–34 (MQATATTLDHEQEYTPINSRNKVLVASLIGTAIE) the chain is Cytoplasmic. Residues 35–55 (FFDFYIYATAAVIVFPHIFFP) traverse the membrane as a helical segment. Residues 56–66 (QGDPTAATLQS) are Periplasmic-facing. A helical transmembrane segment spans residues 67–87 (LATFAIAFVARPIGSAVFGHF). The Cytoplasmic segment spans residues 88–108 (GDRVGRKATLVASLLTMGIST). 2 helical membrane-spanning segments follow: residues 109-129 (VVIGLLPGYATIGIFAPLLLA) and 130-150 (LARFGQGLGLGGEWGGAALLA). Topologically, residues 151–167 (TENAPPRKRALYGSFPQ) are cytoplasmic. A helical transmembrane segment spans residues 168–188 (LGAPIGFFFANGTFLLLSWLL). At 189–192 (TDEQ) the chain is on the periplasmic side. The chain crosses the membrane as a helical span at residues 193-213 (FMSWGWRVPFIFSAVLVIIGL). Residues 214–248 (YVRVSLHESPVFEKVAKAKKQVKIPLGTLLTKHVR) are Cytoplasmic-facing. Residues 249 to 269 (VTVLGTFIMLATYTLFYIMTV) traverse the membrane as a helical segment. Over 270–289 (YSMTFSTAAAPVGLGLPRNE) the chain is Periplasmic. Residues 290-310 (VLWMLMMAVIGFGVMVPVAGL) form a helical membrane-spanning segment. Residues 311–320 (LADAFGRRKS) are Cytoplasmic-facing. Residues 321–341 (MVIITTLIILFALFAFNPLLG) form a helical membrane-spanning segment. Residues 342–345 (SGNP) lie on the Periplasmic side of the membrane. Residues 346–366 (ILVFAFLLLGLSLMGLTFGPM) traverse the membrane as a helical segment. Residues 367–384 (GALLPELFPTEVRYTGAS) are Cytoplasmic-facing. The chain crosses the membrane as a helical span at residues 385-405 (FSYNVASILGASVAPYIAAWL). Residues 406–410 (QTNYG) are Periplasmic-facing. The chain crosses the membrane as a helical span at residues 411–431 (LGAVGLYLAAMAGLTLIALLL). Residues 432–440 (THETRHQSL) are Cytoplasmic-facing.

Belongs to the major facilitator superfamily. Metabolite:H+ Symporter (MHS) family (TC 2.A.1.6) family.

The protein resides in the cell inner membrane. The polypeptide is Inner membrane metabolite transport protein YhjE (yhjE) (Escherichia coli (strain K12)).